Here is a 541-residue protein sequence, read N- to C-terminus: MSFSPPNKSADATIQITEMTRQGTPSSGEAAASTPSTSSTESGDKALEALGYTPVFKREFSRWSSFSFAMSISGVYGTLMSTWIYGLQAGGAAAIMWSWIIGGAGGWALAYSIAEIASAYPSSGAMYFTLKFLAPEEQVPFLCWIAGYLNLVGTVAGGASTEYAASQMLLAAVSITSNFSYVPTPTHVVGVMIGLTTIHAMINTLPTAWLNRLTSGYVVFHISVLLGACVTLLVQKRHDMHDLKYAFTNFQPSSGWSPPGFAFLFGCLTPAWIMTGCDGTARIAEEAKNPQMVVPRAIANATTFTYVIGFFFNLVLVVCMGDPKDLINSPSGQPVAQLFFNGMGRAPAIFFTLCGFGVMNLVAIPGIQAGSRTIFALSRDNLLPFSHIWVRISKRSQTPLIAVWTYAVLEIIINLLGLASSTAIGAVFNVCTVALNVSYVIPIICKMVYGRMQKGPWHMGKYSVWVNAFAVAWNTFMAVIFFFPTRLPVTPENMNYAIVVFFFVLIFALVFWYTHGRHYYTGPLTHSPRATDMSVRTPVGV.

Polar residues predominate over residues 1–22 (MSFSPPNKSADATIQITEMTRQ). The interval 1 to 43 (MSFSPPNKSADATIQITEMTRQGTPSSGEAAASTPSTSSTESG) is disordered. Residues 23 to 41 (GTPSSGEAAASTPSTSSTE) show a composition bias toward low complexity. 12 helical membrane-spanning segments follow: residues 66–86 (FSFA…WIYG), 90–110 (GGAA…WALA), 139–159 (VPFL…AGGA), 188–208 (VVGV…LPTA), 214–234 (TSGY…TLLV), 255–275 (GWSP…WIMT), 301–321 (ATTF…VCMG), 347–367 (PAIF…IPGI), 399–419 (PLIA…LGLA), 424–444 (IGAV…IPII), 464–484 (VWVN…FFFP), and 496–516 (YAIV…YTHG).

This sequence belongs to the amino acid-polyamine-organocation (APC) superfamily.

It is found in the membrane. The polypeptide is Amino-acid permease 2 (aap-2) (Neurospora crassa (strain ATCC 24698 / 74-OR23-1A / CBS 708.71 / DSM 1257 / FGSC 987)).